We begin with the raw amino-acid sequence, 281 residues long: sn-glycerol-3-phosphate transport system permease protein UgpE (281 aa).

The next 6 helical transmembrane spans lie at 16–36, 85–105, 113–133, 142–162, 202–222, and 247–267; these read LILG…AATL, FSIT…IVWF, FFWM…FPTV, LDSY…TFLF, ALFV…LLII, and WNQV…IVLA. In terms of domain architecture, ABC transmembrane type-1 spans 77-268; the sequence is MLNSFIMAFS…IPPVVIVLAM (192 aa).

It belongs to the binding-protein-dependent transport system permease family. UgpAE subfamily. In terms of assembly, the complex is composed of two ATP-binding proteins (UgpC), two transmembrane proteins (UgpA and UgpE) and a solute-binding protein (UgpB).

It is found in the cell inner membrane. Its function is as follows. Part of the ABC transporter complex UgpBAEC involved in sn-glycerol-3-phosphate (G3P) import. Probably responsible for the translocation of the substrate across the membrane. The sequence is that of sn-glycerol-3-phosphate transport system permease protein UgpE (ugpE) from Salmonella choleraesuis (strain SC-B67).